Reading from the N-terminus, the 189-residue chain is UPF0301 protein CCA_00630 (189 aa).

It belongs to the UPF0301 (AlgH) family.

In Chlamydia caviae (strain ATCC VR-813 / DSM 19441 / 03DC25 / GPIC) (Chlamydophila caviae), this protein is UPF0301 protein CCA_00630.